A 95-amino-acid chain; its full sequence is Heteroscorpine-1 (95 aa).

The first 19 residues, 1–19, serve as a signal peptide directing secretion; that stretch reads MNSKLTALIFLGLVAIASC. Positions 55–95 constitute a BetaSPN-type CS-alpha/beta domain; the sequence is EFQCVANIDTMGNCETHCQKTSGEKGFCHGTKCKCGKPLSY. Intrachain disulfides connect Cys58/Cys82, Cys68/Cys87, and Cys72/Cys89.

This sequence belongs to the long chain scorpion toxin family. Class 3 subfamily. In terms of processing, contains 3 disulfide bonds. Expressed by the venom gland.

It localises to the secreted. Its function is as follows. Has antibacterial activity against B.subtilis, K.pneumoniae and P.aeruginosa. This Heterometrus laoticus (Thai giant scorpion) protein is Heteroscorpine-1.